Reading from the N-terminus, the 522-residue chain is Target of rapamycin complex 2 subunit MAPKAP1 (522 aa).

Ala2 carries the N-acetylalanine modification. The interval 2–184 (AFLDNPTIIL…KKIDVYLPLH (183 aa)) is interaction with MAP3K2. An interaction with NBN region spans residues 2 to 267 (AFLDNPTIIL…GFSTLALVEK (266 aa)). A Phosphothreonine modification is found at Thr86. A phosphoserine mark is found at Ser128, Ser186, Ser315, and Ser356. One can recognise a CRIM domain in the interval 139 to 267 (QSILSVRLEQ…GFSTLALVEK (129 aa)). Positions 279 to 353 (LFVRINAAHG…QSAWEFCLVR (75 aa)) are SIN1-type RBD. An SIN1-type PH domain is found at 382 to 487 (HYKSFKVSMI…IVLKVNYILE (106 aa)). Arg393 serves as a coordination point for a 1,2-diacyl-sn-glycero-3-phospho-(1D-myo-inositol-3,4,5-trisphosphate). Thr398 carries the phosphothreonine modification. A 1,2-diacyl-sn-glycero-3-phospho-(1D-myo-inositol-3,4,5-trisphosphate) is bound by residues Lys428 and Lys464. Residues 468 to 522 (FESDAATVNEIVLKVNYILESRASTARADYFAQKQRKLNRRTSFSFQKEKKSGQQ) form an interaction with ATF2 region. Ser510 bears the Phosphoserine mark.

This sequence belongs to the SIN1 family. As to quaternary structure, component of the mechanistic target of rapamycin complex 2 (mTORC2), consisting in two heterotretramers composed of MTOR, MLST8, RICTOR and MAPKAP1/SIN1. The mTORC2 core complex associates with PRR5/PROTOR1 and/or PRR5L/PROTOR2. Contrary to mTORC1, mTORC2 does not bind to and is not sensitive to FKBP12-rapamycin. Interacts with MAP3K2. Interacts with ATF2. Interacts with MAPK8. Interacts with GTP-bound HRAS and KRAS; inhibiting their activity. Interacts with IFNAR2. Interacts with CCDC28B. In terms of assembly, interacts with NBN. Post-translationally, phosphorylation at Ser-128 by PKC promotes relocalization to the perinuclear region, where the mTORC2 complex specifically mediates phosphorylation of SGK1. Phosphorylated at Thr-86 by AKT1 or RPS6KB1 in the presence of growth factors; the effect of this phosphorylation is however unclear. According to two studies, phosphorylation at Thr-86 by AKT1 is part of a positive feedback loop that increases mTORC2 activation. According to another study, phosphorylation at Thr-86 and Thr-398 by RPS6KB1 promotes dissociation from the mTORC2 complex, leading to inhibit mTORC2 signaling. In terms of tissue distribution, ubiquitously expressed, with highest levels in heart and skeletal muscle.

Its subcellular location is the cell membrane. It localises to the endoplasmic reticulum membrane. The protein localises to the early endosome membrane. The protein resides in the late endosome membrane. It is found in the lysosome membrane. Its subcellular location is the golgi apparatus membrane. It localises to the mitochondrion outer membrane. The protein localises to the cytoplasm. The protein resides in the perinuclear region. It is found in the nucleus. Its subcellular location is the cytosol. With respect to regulation, phosphatidylinositol 3,4,5-trisphosphate (PI(3,4,5)P3) promotes MTOR activation by relieving MAPKAP1/SIN1-mediated inhibition of MTOR that takes place in absence of PI(3,4,5)P3. Component of the mechanistic target of rapamycin complex 2 (mTORC2), which transduces signals from growth factors to pathways involved in proliferation, cytoskeletal organization, lipogenesis and anabolic output. In response to growth factors, mTORC2 phosphorylates and activates AGC protein kinase family members, including AKT (AKT1, AKT2 and AKT3), PKC (PRKCA, PRKCB and PRKCE) and SGK1. In contrast to mTORC1, mTORC2 is nutrient-insensitive. Within the mTORC2 complex, MAPKAP1/SIN1 acts as a substrate adapter which recognizes and binds AGC protein kinase family members for phosphorylation by MTOR. mTORC2 plays a critical role in AKT1 activation by mediating phosphorylation of different sites depending on the context, such as 'Thr-450', 'Ser-473', 'Ser-477' or 'Thr-479', facilitating the phosphorylation of the activation loop of AKT1 on 'Thr-308' by PDPK1/PDK1 which is a prerequisite for full activation. mTORC2 catalyzes the phosphorylation of SGK1 at 'Ser-422' and of PRKCA on 'Ser-657'. The mTORC2 complex also phosphorylates various proteins involved in insulin signaling, such as FBXW8 and IGF2BP1. mTORC2 acts upstream of Rho GTPases to regulate the actin cytoskeleton, probably by activating one or more Rho-type guanine nucleotide exchange factors. mTORC2 promotes the serum-induced formation of stress-fibers or F-actin. MAPKAP1 inhibits MAP3K2 by preventing its dimerization and autophosphorylation. Inhibits HRAS and KRAS independently of mTORC2 complex. Enhances osmotic stress-induced phosphorylation of ATF2 and ATF2-mediated transcription. Involved in ciliogenesis, regulates cilia length through its interaction with CCDC28B independently of mTORC2 complex. In terms of biological role, in contrast to isoform 1, isoform 2 and isoform 6, isoform 4 is not a component of the a mTORC2 complex. The polypeptide is Target of rapamycin complex 2 subunit MAPKAP1 (Homo sapiens (Human)).